A 240-amino-acid chain; its full sequence is Endonuclease NucS 1 (240 aa).

It belongs to the NucS endonuclease family.

The protein resides in the cytoplasm. Functionally, cleaves both 3' and 5' ssDNA extremities of branched DNA structures. The protein is Endonuclease NucS 1 of Halobacterium salinarum (strain ATCC 700922 / JCM 11081 / NRC-1) (Halobacterium halobium).